Consider the following 440-residue polypeptide: Argininosuccinate lyase (440 aa).

It belongs to the lyase 1 family. Argininosuccinate lyase subfamily.

The protein localises to the cytoplasm. It catalyses the reaction 2-(N(omega)-L-arginino)succinate = fumarate + L-arginine. It functions in the pathway amino-acid biosynthesis; L-arginine biosynthesis; L-arginine from L-ornithine and carbamoyl phosphate: step 3/3. The chain is Argininosuccinate lyase from Clostridium botulinum (strain ATCC 19397 / Type A).